A 376-amino-acid polypeptide reads, in one-letter code: C2H2 type master regulator of conidiophore development brlA (376 aa).

A compositionally biased stretch (low complexity) spans Thr20 to Ala29. Disordered regions lie at residues Thr20–Leu47, His197–Asn229, and Glu241–Gly267. Polar residues predominate over residues Thr34 to Glu44. The span at His197–Ala209 shows a compositional bias: basic residues. Residues Gln219 to Asn229 are compositionally biased toward polar residues. Residues Glu241–Glu256 show a composition bias toward basic and acidic residues. Residues Cys277 to Phe301 form a C2H2-type 1; degenerate zinc finger. A C2H2-type 2 zinc finger spans residues Phe309–His332. Positions Ile351 to Phe376 are disordered. A compositionally biased stretch (basic and acidic residues) spans Ser367–Phe376.

The protein localises to the nucleus. Its function is as follows. BrlA, abaA and wetA are pivotal regulators of conidiophore development and conidium maturation. They act individually and together to regulate their own expression and that of numerous other sporulation-specific genes. Binds promoters of target genes at brlA response elements (BREs) containing the conserved sequence 5'-(C/A)(A/G)AGGG(G/A)-3'. This Hapsidospora chrysogena (Acremonium chrysogenum) protein is C2H2 type master regulator of conidiophore development brlA.